The chain runs to 249 residues: NADH-quinone oxidoreductase subunit C (249 aa).

This sequence belongs to the complex I 30 kDa subunit family. NDH-1 is composed of 14 different subunits. Subunits NuoB, C, D, E, F, and G constitute the peripheral sector of the complex.

Its subcellular location is the cell inner membrane. It catalyses the reaction a quinone + NADH + 5 H(+)(in) = a quinol + NAD(+) + 4 H(+)(out). Its function is as follows. NDH-1 shuttles electrons from NADH, via FMN and iron-sulfur (Fe-S) centers, to quinones in the respiratory chain. The immediate electron acceptor for the enzyme in this species is believed to be ubiquinone. Couples the redox reaction to proton translocation (for every two electrons transferred, four hydrogen ions are translocated across the cytoplasmic membrane), and thus conserves the redox energy in a proton gradient. The protein is NADH-quinone oxidoreductase subunit C of Xylella fastidiosa (strain M12).